The primary structure comprises 305 residues: MGAQLRVYKRRIRSVTATKKITKAMEMIAASRVVKAQRKVAASTPYARELTRAVTAVGTGSNTKHPLTTEADSPSRAAVLLLTSDRGLAGAFNSNSIKAAEQLTERLEREGRQVDTYIVGRRGLAHYNFRERKVVESFAGFTDEPTYADAKKVAAPLIEAIEKDTAEGGVDELHIVYTEFVSMMTQTAVDSRLLPLSLDEVAEESGAKDEILPLYDFEPSAEDVLDALLPRYVESRIYNALLQSAASKHAATRRAMKSATDNAGELINTLSRLANAARQAEITQEISEIVGGASALADANAGSDN.

The protein belongs to the ATPase gamma chain family. As to quaternary structure, F-type ATPases have 2 components, CF(1) - the catalytic core - and CF(0) - the membrane proton channel. CF(1) has five subunits: alpha(3), beta(3), gamma(1), delta(1), epsilon(1). CF(0) has three main subunits: a, b and c.

It localises to the cell membrane. Functionally, produces ATP from ADP in the presence of a proton gradient across the membrane. The gamma chain is believed to be important in regulating ATPase activity and the flow of protons through the CF(0) complex. This is ATP synthase gamma chain from Streptomyces coelicolor (strain ATCC BAA-471 / A3(2) / M145).